The following is a 141-amino-acid chain: Nucleoside diphosphate kinase (141 aa).

ATP contacts are provided by Lys-11, Phe-59, Arg-87, Thr-93, Arg-104, and Asn-114. The active-site Pros-phosphohistidine intermediate is the His-117.

Belongs to the NDK family. Homotetramer. Mg(2+) is required as a cofactor.

The protein localises to the cytoplasm. The catalysed reaction is a 2'-deoxyribonucleoside 5'-diphosphate + ATP = a 2'-deoxyribonucleoside 5'-triphosphate + ADP. The enzyme catalyses a ribonucleoside 5'-diphosphate + ATP = a ribonucleoside 5'-triphosphate + ADP. Functionally, major role in the synthesis of nucleoside triphosphates other than ATP. The ATP gamma phosphate is transferred to the NDP beta phosphate via a ping-pong mechanism, using a phosphorylated active-site intermediate. This Haemophilus influenzae (strain ATCC 51907 / DSM 11121 / KW20 / Rd) protein is Nucleoside diphosphate kinase.